The chain runs to 220 residues: Translation initiation factor 6 (220 aa).

This sequence belongs to the eIF-6 family.

Functionally, binds to the 50S ribosomal subunit and prevents its association with the 30S ribosomal subunit to form the 70S initiation complex. This Pyrobaculum aerophilum (strain ATCC 51768 / DSM 7523 / JCM 9630 / CIP 104966 / NBRC 100827 / IM2) protein is Translation initiation factor 6.